Consider the following 135-residue polypeptide: Large ribosomal subunit protein uL18 (135 aa).

The disordered stretch occupies residues 1 to 25; sequence MAQTENQKSKRIPLGKDVSTQRRLS.

The protein belongs to the universal ribosomal protein uL18 family. Part of the 50S ribosomal subunit; part of the 5S rRNA/L5/L18/L25 subcomplex. Contacts the 5S and 23S rRNAs.

Functionally, this is one of the proteins that bind and probably mediate the attachment of the 5S RNA into the large ribosomal subunit, where it forms part of the central protuberance. This chain is Large ribosomal subunit protein uL18, found in Nocardia farcinica (strain IFM 10152).